The chain runs to 243 residues: Octanoyltransferase (243 aa).

The 179-residue stretch at P49–W227 folds into the BPL/LPL catalytic domain. Substrate is bound by residues R91–H98, A158–G160, and G171–A173. Residue C189 is the Acyl-thioester intermediate of the active site.

The protein belongs to the LipB family.

It is found in the cytoplasm. The catalysed reaction is octanoyl-[ACP] + L-lysyl-[protein] = N(6)-octanoyl-L-lysyl-[protein] + holo-[ACP] + H(+). Its pathway is protein modification; protein lipoylation via endogenous pathway; protein N(6)-(lipoyl)lysine from octanoyl-[acyl-carrier-protein]: step 1/2. Functionally, catalyzes the transfer of endogenously produced octanoic acid from octanoyl-acyl-carrier-protein onto the lipoyl domains of lipoate-dependent enzymes. Lipoyl-ACP can also act as a substrate although octanoyl-ACP is likely to be the physiological substrate. The protein is Octanoyltransferase of Prochlorococcus marinus (strain MIT 9313).